A 109-amino-acid polypeptide reads, in one-letter code: Archaeosine synthase (109 aa).

The active-site Thioimide intermediate is the Cys-21. Asp-28 (proton donor/acceptor) is an active-site residue. Substrate contacts are provided by residues Asp-28, 43–46 (LAIE), and 62–63 (HE).

Belongs to the archaeosine synthase type 2 family. In terms of assembly, forms a symmetric tunnel-fold (T-fold) homodecamer of two head-to-head facing pentameric subunits, with 10 active sites at the intermonomer interfaces.

It catalyses the reaction 7-cyano-7-carbaguanosine(15) in tRNA + NH4(+) = archaeosine(15) in tRNA. It participates in tRNA modification; archaeosine-tRNA biosynthesis. Is responsible for the final step in the biosynthesis of archaeosine, a modified nucleoside present in the dihydrouridine loop (D-loop) of archaeal tRNA. Catalyzes the conversion of 7-cyano-7-deazaguanine (preQ0)-modified tRNA to archaeosine-tRNA, transforming a nitrile group to a formamidine group. Can use neither glutamine nor asparagine as amino donor in vitro, is only able to utilize free ammonium. However, the enzyme might function in vivo with a partner that serves to generate ammonium. In Pyrobaculum calidifontis (strain DSM 21063 / JCM 11548 / VA1), this protein is Archaeosine synthase.